Reading from the N-terminus, the 673-residue chain is UvrABC system protein B (673 aa).

The Helicase ATP-binding domain occupies 26–183 (EGLEDGLAHQ…RRLAELQYTR (158 aa)). 39 to 46 (GVTGSGKT) contributes to the ATP binding site. The Beta-hairpin motif lies at 92-115 (YYDYYQPEAYVPSSDTFIEKDASV). The 167-residue stretch at 431 to 597 (QVDDLLSEIR…GLNKKVVDIL (167 aa)) folds into the Helicase C-terminal domain. Positions 633 to 668 (QQKIHELEGQMMQHAQNLEFEEAAQIRDQLHQLREL) constitute a UVR domain.

Belongs to the UvrB family. In terms of assembly, forms a heterotetramer with UvrA during the search for lesions. Interacts with UvrC in an incision complex.

Its subcellular location is the cytoplasm. Its function is as follows. The UvrABC repair system catalyzes the recognition and processing of DNA lesions. A damage recognition complex composed of 2 UvrA and 2 UvrB subunits scans DNA for abnormalities. Upon binding of the UvrA(2)B(2) complex to a putative damaged site, the DNA wraps around one UvrB monomer. DNA wrap is dependent on ATP binding by UvrB and probably causes local melting of the DNA helix, facilitating insertion of UvrB beta-hairpin between the DNA strands. Then UvrB probes one DNA strand for the presence of a lesion. If a lesion is found the UvrA subunits dissociate and the UvrB-DNA preincision complex is formed. This complex is subsequently bound by UvrC and the second UvrB is released. If no lesion is found, the DNA wraps around the other UvrB subunit that will check the other stand for damage. The sequence is that of UvrABC system protein B from Salmonella arizonae (strain ATCC BAA-731 / CDC346-86 / RSK2980).